A 1088-amino-acid chain; its full sequence is Probable cellulose synthase A catalytic subunit 9 [UDP-forming] (1088 aa).

Met1 is modified (N-acetylmethionine). The Cytoplasmic segment spans residues 1-283 (MNTGGRLIAG…RSSRINPYRM (283 aa)). Positions 39, 42, 58, 61, 66, 69, 81, and 84 each coordinate Zn(2+). The RING-type; degenerate zinc finger occupies 39 to 85 (CKICRDEIELTDNGEPFIACNECAFPTCRPCYEYERREGNQACPQCG). The chain crosses the membrane as a helical span at residues 284 to 304 (LIFCRLAILGLFFHYRILHPV). Topologically, residues 305-306 (ND) are extracellular. Residues 307–327 (AFGLWLTSVICEIWFAVSWIL) traverse the membrane as a helical segment. The Cytoplasmic portion of the chain corresponds to 328–871 (DQFPKWYPIE…INSVVYPWTS (544 aa)). UDP-alpha-D-glucose contacts are provided by Ser366, Lys372, Glu373, Asp402, and Lys543. Asp402 is an active-site residue. Mn(2+) is bound by residues Lys544 and Asp568. Asp788 is a catalytic residue. The helical transmembrane segment at 872 to 892 (LPLLVYCSLPAICLLTGKFIV) threads the bilayer. Residues 893–897 (PEISN) lie on the Extracellular side of the membrane. Residues 898-918 (YAGILFLLMFMSIAVTGILEM) form a helical membrane-spanning segment. Over 919-933 (QWGKIGIDDWWRNEQ) the chain is Cytoplasmic. Residues 934-954 (FWVIGGVSSHLFALFQGLLKV) form a helical membrane-spanning segment. At 955–983 (LAGVSTNFTVTSKAADDGEFSELYIFKWT) the chain is on the extracellular side. N-linked (GlcNAc...) asparagine glycosylation is present at Asn961. Residues 984 to 1004 (SLLIPPTTLLIINIVGVIVGV) traverse the membrane as a helical segment. The Cytoplasmic portion of the chain corresponds to 1005–1015 (SDAINNGYDSW). A helical transmembrane segment spans residues 1016–1036 (GPLFGRLFFALWVIVHLYPFL). Residues 1037-1045 (KGLLGKQDR) are Extracellular-facing. A helical transmembrane segment spans residues 1046 to 1066 (VPTIILVWSILLASILTLLWV). Topologically, residues 1067 to 1088 (RVNPFVSKDGPVLEICGLDCLK) are cytoplasmic.

It belongs to the glycosyltransferase 2 family. Plant cellulose synthase subfamily. Requires Mn(2+) as cofactor. It depends on Zn(2+) as a cofactor. In terms of tissue distribution, expressed in young plants, stems and flowers.

The protein localises to the cell membrane. The catalysed reaction is [(1-&gt;4)-beta-D-glucosyl](n) + UDP-alpha-D-glucose = [(1-&gt;4)-beta-D-glucosyl](n+1) + UDP + H(+). It participates in glycan metabolism; plant cellulose biosynthesis. In terms of biological role, probable catalytic subunit of cellulose synthase terminal complexes ('rosettes'), required for beta-1,4-glucan microfibril crystallization, a major mechanism of the cell wall formation. This is Probable cellulose synthase A catalytic subunit 9 [UDP-forming] from Arabidopsis thaliana (Mouse-ear cress).